Here is a 63-residue protein sequence, read N- to C-terminus: MAEKKELKTYVHKLYEVDYEKGVIKLKNRRCPRCGSIMAHHMKPVERWHCGKCGYTEFVTKKK.

Zn(2+) contacts are provided by cysteine 31, cysteine 34, cysteine 50, and cysteine 53.

This sequence belongs to the eukaryotic ribosomal protein eS31 family. As to quaternary structure, part of the 30S ribosomal subunit. The cofactor is Zn(2+).

This is Small ribosomal subunit protein eS31 (rps27ae) from Aeropyrum pernix (strain ATCC 700893 / DSM 11879 / JCM 9820 / NBRC 100138 / K1).